A 975-amino-acid chain; its full sequence is Glycine dehydrogenase (decarboxylating) (975 aa).

Lys-723 carries the N6-(pyridoxal phosphate)lysine modification.

This sequence belongs to the GcvP family. In terms of assembly, the glycine cleavage system is composed of four proteins: P, T, L and H. The cofactor is pyridoxal 5'-phosphate.

It carries out the reaction N(6)-[(R)-lipoyl]-L-lysyl-[glycine-cleavage complex H protein] + glycine + H(+) = N(6)-[(R)-S(8)-aminomethyldihydrolipoyl]-L-lysyl-[glycine-cleavage complex H protein] + CO2. In terms of biological role, the glycine cleavage system catalyzes the degradation of glycine. The P protein binds the alpha-amino group of glycine through its pyridoxal phosphate cofactor; CO(2) is released and the remaining methylamine moiety is then transferred to the lipoamide cofactor of the H protein. The sequence is that of Glycine dehydrogenase (decarboxylating) from Burkholderia cenocepacia (strain HI2424).